We begin with the raw amino-acid sequence, 306 residues long: Methionyl-tRNA formyltransferase (306 aa).

(6S)-5,6,7,8-tetrahydrofolate is bound at residue 110–113; that stretch reads SLLP.

The protein belongs to the Fmt family.

The enzyme catalyses L-methionyl-tRNA(fMet) + (6R)-10-formyltetrahydrofolate = N-formyl-L-methionyl-tRNA(fMet) + (6S)-5,6,7,8-tetrahydrofolate + H(+). In terms of biological role, attaches a formyl group to the free amino group of methionyl-tRNA(fMet). The formyl group appears to play a dual role in the initiator identity of N-formylmethionyl-tRNA by promoting its recognition by IF2 and preventing the misappropriation of this tRNA by the elongation apparatus. This Brucella suis (strain ATCC 23445 / NCTC 10510) protein is Methionyl-tRNA formyltransferase.